The sequence spans 368 residues: Endophilin-A2 (368 aa).

The tract at residues 1 to 21 (MSVAGLKKQFYKASQLVSEKV) is membrane-binding amphipathic helix. A BAR domain is found at 18–249 (SEKVGGAEGT…LKRRVREASS (232 aa)). Residues 60 to 87 (PNPASRAKLTMLNTVSKIRGQVKNPGYP) form a required for dimerization upon membrane association region. A coiled-coil region spans residues 180–250 (DEELRQALEK…KRRVREASSR (71 aa)). The interaction with ARC stretch occupies residues 218–254 (LVDAQLDYHRQAVQILEELADKLKRRVREASSRPRRE). The interval 243–309 (RVREASSRPR…SKSMPPLDQP (67 aa)) is disordered. Over residues 245-261 (REASSRPRREFKPRPQE) the composition is skewed to basic and acidic residues. Serine 288 is modified (phosphoserine). Threonine 298 is subject to Phosphothreonine. Residues 306 to 365 (LDQPSCKALYDFEPENDGELGFREGDLITLTNQIDENWYEGMLHGQSGFFPLSYVQVLVP) form the SH3 domain. At tyrosine 315 the chain carries Phosphotyrosine.

It belongs to the endophilin family. As to quaternary structure, interacts with ARC, SYNJ1 and DNM1. Interacts with PDCD6IP. Interacts with BIN2. In terms of tissue distribution, detected in brain and testis (at protein level). Ubiquitous.

The protein resides in the cytoplasm. It is found in the early endosome membrane. Its subcellular location is the cell projection. It localises to the podosome. In terms of biological role, implicated in endocytosis. May recruit other proteins to membranes with high curvature. The protein is Endophilin-A2 (Sh3gl1) of Rattus norvegicus (Rat).